Consider the following 253-residue polypeptide: Spindle pole component 29 (253 aa).

Polar residues predominate over residues 1 to 12 (MDYXNFGNSASK). Disordered stretches follow at residues 1-20 (MDYX…DTLN), 31-123 (KKLR…SSPV), and 210-231 (DMPY…DRSS). Residue threonine 18 is modified to Phosphothreonine. At serine 65 the chain carries Phosphoserine. Basic and acidic residues-rich tracts occupy residues 69-91 (KSDD…REGN) and 211-231 (MPYR…DRSS). Position 240 is a phosphothreonine; by MPS1 (threonine 240).

It belongs to the SPC29 family. In terms of assembly, component of the SPC110 complex containing at least CMD1, SPC29, SPC42 and SCP110. Interacts with BBP1. Post-translationally, MPS1-mediated phosphorylation at Thr-240 is required for spindle pole body duplication.

Its subcellular location is the nucleus. It is found in the cytoplasm. The protein localises to the cytoskeleton. It localises to the microtubule organizing center. The protein resides in the spindle pole body. Its function is as follows. Component of the spindle pole body (SPB) required for the proper execution of spindle pole body (SPB) duplication. Links the central plaque component SPC42 to the inner plaque component SPC110. This is Spindle pole component 29 (SPC29) from Saccharomyces cerevisiae (strain Zymaflore VL3) (Baker's yeast).